Here is a 253-residue protein sequence, read N- to C-terminus: Imidazole glycerol phosphate synthase subunit HisF (253 aa).

Active-site residues include aspartate 11 and aspartate 130.

Belongs to the HisA/HisF family. Heterodimer of HisH and HisF.

The protein localises to the cytoplasm. The enzyme catalyses 5-[(5-phospho-1-deoxy-D-ribulos-1-ylimino)methylamino]-1-(5-phospho-beta-D-ribosyl)imidazole-4-carboxamide + L-glutamine = D-erythro-1-(imidazol-4-yl)glycerol 3-phosphate + 5-amino-1-(5-phospho-beta-D-ribosyl)imidazole-4-carboxamide + L-glutamate + H(+). The protein operates within amino-acid biosynthesis; L-histidine biosynthesis; L-histidine from 5-phospho-alpha-D-ribose 1-diphosphate: step 5/9. In terms of biological role, IGPS catalyzes the conversion of PRFAR and glutamine to IGP, AICAR and glutamate. The HisF subunit catalyzes the cyclization activity that produces IGP and AICAR from PRFAR using the ammonia provided by the HisH subunit. In Lysinibacillus sphaericus (strain C3-41), this protein is Imidazole glycerol phosphate synthase subunit HisF.